Consider the following 216-residue polypeptide: Large ribosomal subunit protein uL3 (216 aa).

The tract at residues 137–158 is disordered; it reads GASHGAHKNHRKPGSIGGASTP.

Belongs to the universal ribosomal protein uL3 family. Part of the 50S ribosomal subunit. Forms a cluster with proteins L14 and L19.

Its function is as follows. One of the primary rRNA binding proteins, it binds directly near the 3'-end of the 23S rRNA, where it nucleates assembly of the 50S subunit. This chain is Large ribosomal subunit protein uL3, found in Pseudarthrobacter chlorophenolicus (strain ATCC 700700 / DSM 12829 / CIP 107037 / JCM 12360 / KCTC 9906 / NCIMB 13794 / A6) (Arthrobacter chlorophenolicus).